Here is a 289-residue protein sequence, read N- to C-terminus: MLKNLFRKTKYITVSQKNIESYKRENTPTIPDGMWVKCNKCGDILYQNDLEKNYMVCNLCGNHFRIGVKERIKYLFDKDTFKEWDYKIKTENPLDFKGYDEKIEHIKEKTNLSEAVTTGKGKIAGMEAVVCIMDSKFMMGSMGCVVGEKITRAIERAIKLRLPVIIFTASGGARMQEGILSLMQMAKVSSALAKLDEEGLLYVCVLTDPTTGGVTASFAMLGDIILAEPDGLIGFAGKRVIEQTINEKLPEDFQKSEFLLEHGFIDKIVPRSDLRKVLAKLINMHQNSF.

The region spanning 34–289 (MWVKCNKCGD…KLINMHQNSF (256 aa)) is the CoA carboxyltransferase N-terminal domain. 4 residues coordinate Zn(2+): Cys38, Cys41, Cys57, and Cys60. Residues 38–60 (CNKCGDILYQNDLEKNYMVCNLC) form a C4-type zinc finger.

Belongs to the AccD/PCCB family. In terms of assembly, acetyl-CoA carboxylase is a heterohexamer composed of biotin carboxyl carrier protein (AccB), biotin carboxylase (AccC) and two subunits each of ACCase subunit alpha (AccA) and ACCase subunit beta (AccD). It depends on Zn(2+) as a cofactor.

Its subcellular location is the cytoplasm. The enzyme catalyses N(6)-carboxybiotinyl-L-lysyl-[protein] + acetyl-CoA = N(6)-biotinyl-L-lysyl-[protein] + malonyl-CoA. The protein operates within lipid metabolism; malonyl-CoA biosynthesis; malonyl-CoA from acetyl-CoA: step 1/1. In terms of biological role, component of the acetyl coenzyme A carboxylase (ACC) complex. Biotin carboxylase (BC) catalyzes the carboxylation of biotin on its carrier protein (BCCP) and then the CO(2) group is transferred by the transcarboxylase to acetyl-CoA to form malonyl-CoA. The protein is Acetyl-coenzyme A carboxylase carboxyl transferase subunit beta of Clostridium botulinum (strain Langeland / NCTC 10281 / Type F).